Reading from the N-terminus, the 419-residue chain is 3-isopropylmalate dehydratase large subunit (419 aa).

[4Fe-4S] cluster contacts are provided by Cys301, Cys361, and Cys364.

Belongs to the aconitase/IPM isomerase family. LeuC type 2 subfamily. Heterodimer of LeuC and LeuD. The cofactor is [4Fe-4S] cluster.

The enzyme catalyses (2R,3S)-3-isopropylmalate = (2S)-2-isopropylmalate. It functions in the pathway amino-acid biosynthesis; L-leucine biosynthesis; L-leucine from 3-methyl-2-oxobutanoate: step 2/4. Its function is as follows. Catalyzes the isomerization between 2-isopropylmalate and 3-isopropylmalate, via the formation of 2-isopropylmaleate. The polypeptide is 3-isopropylmalate dehydratase large subunit (Campylobacter hominis (strain ATCC BAA-381 / DSM 21671 / CCUG 45161 / LMG 19568 / NCTC 13146 / CH001A)).